The following is a 289-amino-acid chain: Dual-specificity RNA pseudouridine synthase RluF (289 aa).

One can recognise an S4 RNA-binding domain in the interval 7–74 (TRLNKYISES…DDLVLIALNK (68 aa)). 2 interaction with RNA regions span residues 105-108 (RLDK) and 187-190 (RQIR). Asp-107 (nucleophile) is an active-site residue. The interval 241–289 (SEAKPKAKAKPKTAGIKRPVVAIEKSNEKARPASSGKRFTSPGRKKKGR) is disordered.

This sequence belongs to the pseudouridine synthase RsuA family. As to quaternary structure, monomer.

It catalyses the reaction uridine(2604) in 23S rRNA = pseudouridine(2604) in 23S rRNA. The enzyme catalyses uridine(35) in tRNA(Tyr) = pseudouridine(35) in tRNA(Tyr). Functionally, dual specificity enzyme that catalyzes the synthesis of pseudouridine from uracil-2604 in 23S ribosomal RNA and from uracil-35 in the anticodon of tRNA(Tyr). In Salmonella typhi, this protein is Dual-specificity RNA pseudouridine synthase RluF (rluF).